Here is a 483-residue protein sequence, read N- to C-terminus: MLPTSVSRSLYLKTFRSHLLRAPQIVLKRMSSSIDISKINSWNKEFQSDLTHQLATTVLKNYNADDALLNKTRLQKQDNRVFNTVVSTDSTPVTNQKSSGRCWLFAATNQLRLNVLSELNLKEFELSQAYLFFYDKLEKANYFLDQIVSSADQDIDSRLVQYLLAAPTEDGGQYSMFLNLVKKYGLIPKDLYGDLPYSTTASRKWNSLLTTKLREFAETLRTALKERSADDSIIVTLREQMQREIFRLMSLFMDIPPVQPNEQFTWEYVDKDKKIHTIKSTPLEFASKYAKLDPSTPVSLINDPRHPYGKLIKIDRLGNVLGGDAVIYLNVDNETLSKLVVKRLQNNKAVFFGSHTPKFMDKTTGVMDIELWNYPAIGYNLRQQKASRIRYHESLMTHAMLITGCHVDETSKLPLRYRVENSWGKDSGKDGLYVMTQKYFEEYCFQIVVDINELPKELASKFTSGKEEPIVLPIWDPMGALAK.

Residues 1-30 constitute a mitochondrion transit peptide; sequence MLPTSVSRSLYLKTFRSHLLRAPQIVLKRM. Active-site residues include Cys-102, His-398, and Asn-421. Position 483 (Lys-483) is a propeptide, removed in mature form; by autocatalysis.

It belongs to the peptidase C1 family. In terms of assembly, homohexamer. Binds to nucleic acids. Binds single-stranded DNA and RNA with higher affinity than double-stranded DNA. The N-terminus of isoform Cytoplasmic is blocked.

The protein resides in the mitochondrion. It is found in the cytoplasm. It catalyses the reaction Inactivates bleomycin B2 (a cytotoxic glycometallopeptide) by hydrolysis of a carboxyamide bond of beta-aminoalanine, but also shows general aminopeptidase activity. The specificity varies somewhat with source, but amino acid arylamides of Met, Leu and Ala are preferred.. With respect to regulation, inhibited by E64, a specific inhibitor of cysteine proteases, N-ethylmaleimide, iodacetamide, and mercury and zinc ions. Its function is as follows. The normal physiological role of the enzyme is unknown, but it is not essential for the viability of yeast cells. Has aminopeptidase activity, shortening substrate peptides sequentially by 1 amino acid. Has bleomycin hydrolase activity, which can protect the cell from the toxic effects of bleomycin. Has homocysteine-thiolactonase activity, protecting the cell against homocysteine toxicity. Acts as a repressor in the GAL4 regulatory system, but this does not require either the peptidase or nucleic acid-binding activities. In Saccharomyces cerevisiae (strain JAY291) (Baker's yeast), this protein is Cysteine proteinase 1, mitochondrial (LAP3).